The sequence spans 387 residues: Phosphoglycerate kinase (387 aa).

Residues 21–23 (DLN), R36, 59–62 (HLGR), R113, and R146 contribute to the substrate site. ATP-binding positions include K197, E314, and 340 to 343 (GGDT).

This sequence belongs to the phosphoglycerate kinase family. Monomer.

It is found in the cytoplasm. It catalyses the reaction (2R)-3-phosphoglycerate + ATP = (2R)-3-phospho-glyceroyl phosphate + ADP. It functions in the pathway carbohydrate degradation; glycolysis; pyruvate from D-glyceraldehyde 3-phosphate: step 2/5. This Pseudomonas fluorescens (strain Pf0-1) protein is Phosphoglycerate kinase.